The sequence spans 242 residues: Venom nerve growth factor 1 (242 aa).

Positions methionine 1–alanine 18 are cleaved as a signal peptide. A propeptide spanning residues alanine 19–arginine 125 is cleaved from the precursor. Residues valine 26–leucine 69 are disordered. The segment covering proline 31–glutamine 43 has biased composition (polar residues). Residues arginine 52 to aspartate 66 show a composition bias toward basic and acidic residues. Intrachain disulfides connect cysteine 139-cysteine 203, cysteine 181-cysteine 231, and cysteine 191-cysteine 233. N-linked (GlcNAc...) asparagine glycosylation occurs at asparagine 147.

This sequence belongs to the NGF-beta family. Homodimer; non-covalently linked. As to expression, expressed by the venom gland.

The protein localises to the secreted. In terms of biological role, nerve growth factor is important for the development and maintenance of the sympathetic and sensory nervous systems. It stimulates division and differentiation of sympathetic and embryonic sensory neurons as well as basal forebrain cholinergic neurons in the brain. Its relevance in the snake venom is not clear. However, it has been shown to inhibit metalloproteinase-dependent proteolysis of platelet glycoprotein Ib alpha, suggesting a metalloproteinase inhibition to prevent metalloprotease autodigestion and/or protection against prey proteases. Binds a lipid between the two protein chains in the homodimer. The lipid-bound form promotes histamine relase from mouse mast cells, contrary to the lipid-free form. This chain is Venom nerve growth factor 1, found in Demansia vestigiata (Lesser black whip snake).